The following is a 119-amino-acid chain: Large ribosomal subunit protein uL14 (119 aa).

Belongs to the universal ribosomal protein uL14 family. As to quaternary structure, part of the 50S ribosomal subunit. Forms a cluster with proteins L3 and L19. In the 70S ribosome, L14 and L19 interact and together make contacts with the 16S rRNA in bridges B5 and B8.

Functionally, binds to 23S rRNA. Forms part of two intersubunit bridges in the 70S ribosome. This chain is Large ribosomal subunit protein uL14, found in Ehrlichia ruminantium (strain Gardel).